The primary structure comprises 126 residues: Protein translocase subunit SecE (126 aa).

Helical transmembrane passes span 18–38, 40–60, and 97–117; these read LKWV…YLYG, LSVV…LGVA, and IVLA…GIMV.

This sequence belongs to the SecE/SEC61-gamma family. As to quaternary structure, component of the Sec protein translocase complex. Heterotrimer consisting of SecY, SecE and SecG subunits. The heterotrimers can form oligomers, although 1 heterotrimer is thought to be able to translocate proteins. Interacts with the ribosome. Interacts with SecDF, and other proteins may be involved. Interacts with SecA.

Its subcellular location is the cell inner membrane. In terms of biological role, essential subunit of the Sec protein translocation channel SecYEG. Clamps together the 2 halves of SecY. May contact the channel plug during translocation. The polypeptide is Protein translocase subunit SecE (Vibrio cholerae serotype O1 (strain ATCC 39315 / El Tor Inaba N16961)).